Consider the following 108-residue polypeptide: Ferredoxin, plant-type (108 aa).

One can recognise a 2Fe-2S ferredoxin-type domain in the interval 5 to 96 (FEITVQPGGE…DLCIERYSKP (92 aa)). [2Fe-2S] cluster-binding residues include Cys-40, Cys-45, Cys-48, and Cys-80.

Belongs to the 2Fe2S plant-type ferredoxin family.

Its pathway is aromatic compound metabolism; catechol degradation. Functionally, ferredoxins are iron-sulfur proteins that transfer electrons in a wide variety of metabolic reactions. This Pseudomonas putida (Arthrobacter siderocapsulatus) protein is Ferredoxin, plant-type (nahT).